The following is a 1943-amino-acid chain: Sickle tail protein homolog (1943 aa).

Disordered stretches follow at residues 1-79 (MEEN…KEIL) and 112-177 (QERL…RSTN). Basic and acidic residues predominate over residues 38 to 47 (AECRRTKERL). The segment covering 48-62 (SNGNSRGSVSKSSRN) has biased composition (polar residues). Residue Ser-169 is modified to Phosphoserine. Tyr-244 bears the Phosphotyrosine mark. A disordered region spans residues 290 to 331 (ARGDGPGAPRPGSTAHPPHAIPNSPPSTPVPHSMPPSPSRIP). A compositionally biased stretch (pro residues) spans 308–328 (HAIPNSPPSTPVPHSMPPSPS). Ser-357 carries an O-linked (GlcNAc) serine glycan. 2 positions are modified to phosphoserine: Ser-361 and Ser-365. A Phosphotyrosine modification is found at Tyr-393. The interval 456-476 (RKYPDSHLPTLGSKTPPASPH) is disordered. At Thr-470 the chain carries Phosphothreonine. 2 positions are modified to phosphoserine: Ser-474 and Ser-526. Coiled coils occupy residues 557–581 (RETR…QSAL) and 644–685 (MSLL…ELEI). The residue at position 809 (Ser-809) is a Phosphoserine. Positions 848–874 (VLKSQEEAAHTSGQPFHSTGAPGDAKS) are disordered. A coiled-coil region spans residues 957 to 985 (SAKNRAVSIEKAEKKWEEKRQNLDHYNGK). Disordered regions lie at residues 1003-1230 (PNLE…SDAS), 1305-1329 (KTKE…TESS), and 1352-1377 (PKEA…TEEN). Phosphoserine occurs at positions 1027, 1030, 1033, and 1044. Residues 1044-1053 (SPPPPPPPPR) show a composition bias toward pro residues. Basic and acidic residues-rich tracts occupy residues 1155–1167 (EPSR…KDTR), 1174–1192 (PKEK…KSDV), and 1305–1318 (KTKE…DKCH). The segment covering 1368–1377 (SSSSSPTEEN) has biased composition (polar residues). Phosphoserine is present on Ser-1461. Residues 1464–1490 (FEECDEELERMMMEEKIEEEEEEENGD) are a coiled coil. Disordered stretches follow at residues 1481–1572 (EEEE…PKKK), 1606–1660 (EEEE…EIRK), and 1677–1943 (ENTI…KETS). 2 stretches are compositionally biased toward polar residues: residues 1491–1501 (SVVQNNNTSQM) and 1512–1533 (RTGQ…TRNP). 2 stretches are compositionally biased toward basic and acidic residues: residues 1539–1548 (NRTELNKFSH) and 1612–1625 (GTLK…RFEI). Polar residues predominate over residues 1643-1653 (QPSIESTSPIS). Residues 1656–1686 (DEIRKNTYRTLDSLEQTIKQLENTISEMSPK) are a coiled coil. Composition is skewed to polar residues over residues 1691–1706 (TSCS…SSHI) and 1731–1747 (IPSA…QTSR). At Ser-1739 the chain carries Phosphoserine. Basic and acidic residues predominate over residues 1763–1775 (KPGKQSKLQDPRQ). Residues 1806-1825 (SPSSGKSSSLPSSSGDSSNL) are compositionally biased toward low complexity. Polar residues-rich tracts occupy residues 1834 to 1843 (SIASNPLSPQ) and 1853 to 1869 (LIPS…SLTH). Ser-1841 carries the post-translational modification Phosphoserine. Low complexity predominate over residues 1892–1905 (SFSSSPPSPASSVS). Ser-1896, Ser-1899, and Ser-1902 each carry phosphoserine. Over residues 1906 to 1943 (LNQGAKGTRTIHTPSLTSYKAQNGSSSKATPSTAKETS) the composition is skewed to polar residues.

In terms of assembly, interacts with CPNE4 (via VWFA domain).

It is found in the cytoplasm. It localises to the cytoskeleton. The protein resides in the microtubule organizing center. Its subcellular location is the centrosome. Its function is as follows. Required for normal development of intervertebral disks. This chain is Sickle tail protein homolog (KIAA1217), found in Homo sapiens (Human).